Here is a 967-residue protein sequence, read N- to C-terminus: Phosphatidylserine decarboxylase proenzyme 3 (967 aa).

Positions 217 to 255 are disordered; sequence FIAEPDSSIPPSESSVSISTDTGKETPPSKSKKSSNQPY. A compositionally biased stretch (low complexity) spans 220–237; it reads EPDSSIPPSESSVSISTD. The 124-residue stretch at 250–373 folds into the C2 domain; sequence SSNQPYVSIG…SSAQVDPETG (124 aa). Residues aspartate 343, serine 346, and aspartate 349 each coordinate Ca(2+). Positions 532–544 are enriched in low complexity; sequence DQQATQTPQSPSS. The tract at residues 532–566 is disordered; that stretch reads DQQATQTPQSPSSNEESGPGTPTQTSDQYEDSEDS. The span at 545-558 shows a compositional bias: polar residues; that stretch reads NEESGPGTPTQTSD. Catalysis depends on charge relay system; for autoendoproteolytic cleavage activity residues aspartate 769, histidine 825, and serine 912. Serine 912 serves as the catalytic Schiff-base intermediate with substrate; via pyruvic acid; for decarboxylase activity. Serine 912 is subject to Pyruvic acid (Ser); by autocatalysis. Positions 947 to 967 are disordered; sequence IGQKIDPNKPTDAEDHSKSDS.

The protein belongs to the phosphatidylserine decarboxylase family. PSD-B subfamily. Eukaryotic type II sub-subfamily. Heterodimer of a large membrane-associated beta subunit and a small pyruvoyl-containing alpha subunit. Pyruvate serves as cofactor. The cofactor is Ca(2+). In terms of processing, is synthesized initially as an inactive proenzyme. Formation of the active enzyme involves a self-maturation process in which the active site pyruvoyl group is generated from an internal serine residue via an autocatalytic post-translational modification. Two non-identical subunits are generated from the proenzyme in this reaction, and the pyruvate is formed at the N-terminus of the alpha chain, which is derived from the carboxyl end of the proenzyme. The autoendoproteolytic cleavage occurs by a canonical serine protease mechanism, in which the side chain hydroxyl group of the serine supplies its oxygen atom to form the C-terminus of the beta chain, while the remainder of the serine residue undergoes an oxidative deamination to produce ammonia and the pyruvoyl prosthetic group on the alpha chain. During this reaction, the Ser that is part of the protease active site of the proenzyme becomes the pyruvoyl prosthetic group, which constitutes an essential element of the active site of the mature decarboxylase.

Its subcellular location is the golgi apparatus membrane. It localises to the endosome membrane. The protein resides in the cytoplasm. The enzyme catalyses a 1,2-diacyl-sn-glycero-3-phospho-L-serine + H(+) = a 1,2-diacyl-sn-glycero-3-phosphoethanolamine + CO2. The protein operates within phospholipid metabolism; phosphatidylethanolamine biosynthesis; phosphatidylethanolamine from CDP-diacylglycerol: step 2/2. Catalyzes the formation of phosphatidylethanolamine (PtdEtn) from phosphatidylserine (PtdSer). Plays a central role in phospholipid metabolism and in the interorganelle trafficking of phosphatidylserine. Together with psd1 and psd2, responsible for the majority of phosphatidylethanolamine synthesis. This Schizosaccharomyces pombe (strain 972 / ATCC 24843) (Fission yeast) protein is Phosphatidylserine decarboxylase proenzyme 3.